We begin with the raw amino-acid sequence, 353 residues long: Mitogen-activated protein kinase mpkB (353 aa).

The 289-residue stretch at 21 to 309 (YEIQDVIGEG…VEEALRHPYL (289 aa)) folds into the Protein kinase domain. Residues 27–35 (IGEGAYGVV) and Lys50 each bind ATP. Asp145 serves as the catalytic Proton acceptor.

It belongs to the protein kinase superfamily. Ser/Thr protein kinase family. MAP kinase subfamily. Mg(2+) serves as cofactor.

The protein resides in the nucleus. The catalysed reaction is L-seryl-[protein] + ATP = O-phospho-L-seryl-[protein] + ADP + H(+). It catalyses the reaction L-threonyl-[protein] + ATP = O-phospho-L-threonyl-[protein] + ADP + H(+). Activated by threonine and tyrosine phosphorylation. Functionally, mitogen-activated protein kinase (MAPK) that plays a role in conidiation and regulation of secondary metabolite biosynthesis. Acts as a repressor of dihydroxynaphthalene (DHN)-melanin production. The polypeptide is Mitogen-activated protein kinase mpkB (Aspergillus fumigatus (strain CBS 144.89 / FGSC A1163 / CEA10) (Neosartorya fumigata)).